A 276-amino-acid polypeptide reads, in one-letter code: MLATHTRTVFYISDGTGITAETFGNAILAQFDIRPRHVRLPFIDTEDKAHQVVRQINHTAELEGKKPIVFTTLVNMSVLKIIEDGCRGMLLDMFGTFIRPLESELGVKSHHRVGRFSDISVSKEYSDRIEAINFSLDHDDGQSHRDLSGADVILIGVSRSGKTPTSLYLAMQCGLKVANYPLIPEDFERRQLPPALVPHRKKIFGLTIDPQRLSQIRNERRPGSRYADLVNCRNEVAEAEAMMRRSGIRWLSTTTKSIEEIATTILQEVRPERLQY.

156 to 163 serves as a coordination point for ADP; it reads GVSRSGKT.

It belongs to the pyruvate, phosphate/water dikinase regulatory protein family. PSRP subfamily.

It catalyses the reaction [pyruvate, water dikinase] + ADP = [pyruvate, water dikinase]-phosphate + AMP + H(+). It carries out the reaction [pyruvate, water dikinase]-phosphate + phosphate + H(+) = [pyruvate, water dikinase] + diphosphate. Its function is as follows. Bifunctional serine/threonine kinase and phosphorylase involved in the regulation of the phosphoenolpyruvate synthase (PEPS) by catalyzing its phosphorylation/dephosphorylation. The sequence is that of Putative phosphoenolpyruvate synthase regulatory protein from Acidovorax ebreus (strain TPSY) (Diaphorobacter sp. (strain TPSY)).